Here is a 224-residue protein sequence, read N- to C-terminus: Mammalian ependymin-related protein 1 (224 aa).

Positions 1–37 are cleaved as a signal peptide; it reads MLTRAPRRLVQGPRETWLLGGLWVWILCGLGMAGSPG. Disulfide bonds link C42–C172, C88–C222, and C113–C210. N-linked (GlcNAc...) asparagine glycosylation is found at N130 and N182.

Belongs to the ependymin family. In terms of assembly, homodimer. In terms of processing, N-glycosylated; the glycan contains mannose-6-phosphate moieties. In terms of tissue distribution, detected in brain (at protein level).

The protein resides in the lysosome lumen. It is found in the secreted. Binds anionic lipids and gangliosides at acidic pH. The protein is Mammalian ependymin-related protein 1 (Epdr1) of Rattus norvegicus (Rat).